We begin with the raw amino-acid sequence, 85 residues long: Small ribosomal subunit protein uS17 (85 aa).

The protein belongs to the universal ribosomal protein uS17 family. Part of the 30S ribosomal subunit.

One of the primary rRNA binding proteins, it binds specifically to the 5'-end of 16S ribosomal RNA. The polypeptide is Small ribosomal subunit protein uS17 (Anaeromyxobacter dehalogenans (strain 2CP-1 / ATCC BAA-258)).